A 293-amino-acid chain; its full sequence is Shikimate dehydrogenase (NADP(+)) (293 aa).

Shikimate-binding positions include 20-22 (SLT) and T72. The Proton acceptor role is filled by K76. Shikimate contacts are provided by N97 and D112. Residues 136–140 (GAGGA) and I230 each bind NADP(+). Y232 is a shikimate binding site. G253 is an NADP(+) binding site.

This sequence belongs to the shikimate dehydrogenase family. Homodimer.

It carries out the reaction shikimate + NADP(+) = 3-dehydroshikimate + NADPH + H(+). The protein operates within metabolic intermediate biosynthesis; chorismate biosynthesis; chorismate from D-erythrose 4-phosphate and phosphoenolpyruvate: step 4/7. Involved in the biosynthesis of the chorismate, which leads to the biosynthesis of aromatic amino acids. Catalyzes the reversible NADPH linked reduction of 3-dehydroshikimate (DHSA) to yield shikimate (SA). The polypeptide is Shikimate dehydrogenase (NADP(+)) (Arthrobacter sp. (strain FB24)).